We begin with the raw amino-acid sequence, 379 residues long: Glucose-1-phosphate adenylyltransferase (379 aa).

Alpha-D-glucose 1-phosphate-binding positions include Gly-164, 179-180 (EK), and Ser-190.

It belongs to the bacterial/plant glucose-1-phosphate adenylyltransferase family. In terms of assembly, homotetramer.

The enzyme catalyses alpha-D-glucose 1-phosphate + ATP + H(+) = ADP-alpha-D-glucose + diphosphate. Its pathway is glycan biosynthesis; glycogen biosynthesis. Functionally, involved in the biosynthesis of ADP-glucose, a building block required for the elongation reactions to produce glycogen. Catalyzes the reaction between ATP and alpha-D-glucose 1-phosphate (G1P) to produce pyrophosphate and ADP-Glc. In Streptococcus agalactiae serotype Ia (strain ATCC 27591 / A909 / CDC SS700), this protein is Glucose-1-phosphate adenylyltransferase.